Reading from the N-terminus, the 342-residue chain is Trace amine-associated receptor 8 (342 aa).

Residues 1–31 (MTSNFSQPVVQLCYEDVNGSCIETPYSPGSR) lie on the Extracellular side of the membrane. Residues N4 and N18 are each glycosylated (N-linked (GlcNAc...) asparagine). Intrachain disulfides connect C21/C185 and C104/C189. A helical membrane pass occupies residues 32–52 (VILYTAFSFGSLLAVFGNLLV). At 53–67 (MTSVLHFKQLHSPTN) the chain is on the cytoplasmic side. A helical transmembrane segment spans residues 68–88 (FLIASLACADFLVGVTVMLFS). Over 89–111 (MVRTVESCWYFGAKFCTLHSCCD) the chain is Extracellular. The helical transmembrane segment at 112–132 (VAFCYSSVLHLCFICIDRYIV) threads the bilayer. Residues 133–146 (VTDPLVYATKFTVS) are Cytoplasmic-facing. The helical transmembrane segment at 147–167 (VSGICISVSWILPLTYSGAVF) threads the bilayer. The Extracellular segment spans residues 168-195 (YTGVNDDGLEELVSALNCVGGCQIIVSQ). A helical membrane pass occupies residues 196–216 (GWVLIDFLLFFIPTLVMIILY). Over 217-258 (SKIFLIAKQQAIKIETTSSKVESSSESYKIRVAKRERKAAKT) the chain is Cytoplasmic. The chain crosses the membrane as a helical span at residues 259-279 (LGVTVLAFVISWLPYTVDILI). D280 is a topological domain (extracellular). Residues 281–301 (AFMGFLTPAYIYEICCWSAYY) traverse the membrane as a helical segment. The Cytoplasmic portion of the chain corresponds to 302 to 342 (NSAMNPLIYALFYPWFRKAIKLILSGDVLKASSSTISLFLE).

This sequence belongs to the G-protein coupled receptor 1 family. As to expression, expressed in kidney and amygdala. Not expressed in other tissues or brain regions tested.

It localises to the cell membrane. In terms of biological role, olfactory receptor specific for trace amines. Trace amine compounds are enriched in animal body fluids and act on trace amine-associated receptors (TAARs) to elicit both intraspecific and interspecific innate behaviors. Ligand-binding causes a conformation change that triggers signaling via G alpha proteins, possibly G(i)/G(o) G alpha proteins. This is Trace amine-associated receptor 8 (TAAR8) from Homo sapiens (Human).